Here is a 52-residue protein sequence, read N- to C-terminus: Insulin-2 (52 aa).

3 disulfide bridges follow: C7-C38, C19-C51, and C37-C42.

Belongs to the insulin family. Heterodimer of a B chain and an A chain linked by two disulfide bonds.

The protein resides in the secreted. Functionally, insulin decreases blood glucose concentration. It increases cell permeability to monosaccharides, amino acids and fatty acids. It accelerates glycolysis, the pentose phosphate cycle, and glycogen synthesis in liver. This Huso dauricus (Kaluga sturgeon) protein is Insulin-2.